Reading from the N-terminus, the 183-residue chain is Protein P7 (183 aa).

It is found in the host nucleus. Functionally, may play a role in inhibition of the host immune system by counteracting the type I interferon response. This Gadus morhua (Atlantic cod) protein is Protein P7.